We begin with the raw amino-acid sequence, 263 residues long: 3-methyl-2-oxobutanoate hydroxymethyltransferase (263 aa).

Mg(2+) is bound by residues D45 and D84. 3-methyl-2-oxobutanoate is bound by residues 45–46 (DS), D84, and K112. E114 is a Mg(2+) binding site. Residue E181 is the Proton acceptor of the active site.

Belongs to the PanB family. As to quaternary structure, homodecamer; pentamer of dimers. It depends on Mg(2+) as a cofactor.

The protein resides in the cytoplasm. The enzyme catalyses 3-methyl-2-oxobutanoate + (6R)-5,10-methylene-5,6,7,8-tetrahydrofolate + H2O = 2-dehydropantoate + (6S)-5,6,7,8-tetrahydrofolate. It participates in cofactor biosynthesis; (R)-pantothenate biosynthesis; (R)-pantoate from 3-methyl-2-oxobutanoate: step 1/2. Functionally, catalyzes the reversible reaction in which hydroxymethyl group from 5,10-methylenetetrahydrofolate is transferred onto alpha-ketoisovalerate to form ketopantoate. This Buchnera aphidicola subsp. Schizaphis graminum (strain Sg) protein is 3-methyl-2-oxobutanoate hydroxymethyltransferase.